A 962-amino-acid polypeptide reads, in one-letter code: AP2-associated protein kinase 1 (962 aa).

An N-acetylmethionine modification is found at Met-1. Residues 1 to 11 (MKKFFDSRREQ) are compositionally biased toward basic and acidic residues. Residues 1 to 27 (MKKFFDSRREQGSSGLGSGSSGGGGSS) are disordered. Position 14 is a phosphoserine (Ser-14). The span at 14-27 (SGLGSGSSGGGGSS) shows a compositional bias: gly residues. In terms of domain architecture, Protein kinase spans 46–314 (VTVDEVLAEG…QVSYFSFKLL (269 aa)). ATP-binding positions include 52–60 (LAEGGFALV) and Lys-74. Residue Asp-176 is the Proton acceptor of the active site. Tyr-234 is subject to Phosphotyrosine. The residue at position 235 (Ser-235) is a Phosphoserine. 2 disordered regions span residues 325-515 (NSPI…QFQA) and 576-633 (PQAQ…RAGH). A phosphothreonine mark is found at Thr-353 and Thr-388. Arg-390 carries the post-translational modification Omega-N-methylarginine. Residues 397 to 418 (PLPQATGPSNQPSLLASVSQPK) show a composition bias toward polar residues. Low complexity predominate over residues 419–434 (AQATPSQPLQSSQPKQ). A compositionally biased stretch (pro residues) spans 435–444 (PQAPPTPQQT). At Thr-440 the chain carries Phosphothreonine. Low complexity-rich tracts occupy residues 445-485 (PAPQ…QPQQ), 498-514 (QQQQ…QQFQ), and 576-606 (PQAQ…KVQT). Thr-607 carries the phosphothreonine modification. Over residues 614-628 (GQKVGSLTPPSSPKT) the composition is skewed to polar residues. The residue at position 619 (Ser-619) is a Phosphoserine. A Phosphothreonine modification is found at Thr-621. Phosphoserine is present on residues Ser-624, Ser-625, Ser-638, and Ser-651. At Thr-654 the chain carries Phosphothreonine. The segment covering 664–677 (ASLSKSKSATTTPS) has biased composition (low complexity). The segment at 664-702 (ASLSKSKSATTTPSGSPRTSQQNVSNASEGSTWNPFDDD) is disordered. The span at 678 to 697 (GSPRTSQQNVSNASEGSTWN) shows a compositional bias: polar residues. 4 positions are modified to phosphoserine: Ser-732, Ser-847, Ser-938, and Ser-939. Residues 824-961 (EKADAAVESL…SLLLVDQLID (138 aa)) are clathrin-binding domain (CBD). 2 disordered regions span residues 839–860 (PPVA…TDSL) and 925–946 (LITK…ESSL). A compositionally biased stretch (polar residues) spans 846–860 (PSHTESVTSNRTDSL). The segment covering 932-945 (GGHSRNSSGSSESS) has biased composition (low complexity).

The protein belongs to the protein kinase superfamily. Ser/Thr protein kinase family. In terms of assembly, interacts (via CBD domain) with clathrin. Interacts with AP-2 complex. Interacts with NUMB. Interacts with alpha-adaptin. Interacts with EPS15. Interacts with membrane-bound activated NOTCH1 but not with the inactive full-length form of NOTCH1. Preferentially interacts with monoubiquitinated activated NOTCH1 compared to the non-ubiquitinated form. Autophosphorylated.

Its subcellular location is the cell membrane. The protein resides in the membrane. It is found in the clathrin-coated pit. The protein localises to the presynapse. It carries out the reaction L-seryl-[protein] + ATP = O-phospho-L-seryl-[protein] + ADP + H(+). The enzyme catalyses L-threonyl-[protein] + ATP = O-phospho-L-threonyl-[protein] + ADP + H(+). With respect to regulation, stimulated by clathrin. In terms of biological role, regulates clathrin-mediated endocytosis by phosphorylating the AP2M1/mu2 subunit of the adaptor protein complex 2 (AP-2) which ensures high affinity binding of AP-2 to cargo membrane proteins during the initial stages of endocytosis. Preferentially, may phosphorylate substrates on threonine residues. Regulates phosphorylation of other AP-2 subunits as well as AP-2 localization and AP-2-mediated internalization of ligand complexes. Phosphorylates NUMB and regulates its cellular localization, promoting NUMB localization to endosomes. Binds to and stabilizes the activated form of NOTCH1, increases its localization in endosomes and regulates its transcriptional activity. This is AP2-associated protein kinase 1 (Aak1) from Rattus norvegicus (Rat).